The chain runs to 357 residues: Phosphoserine aminotransferase (357 aa).

An L-glutamate-binding site is contributed by Arg41. Residues 76–77 (GT), Trp102, Thr152, Asp171, and Gln194 contribute to the pyridoxal 5'-phosphate site. Lys195 is modified (N6-(pyridoxal phosphate)lysine). 235–236 (NT) is a pyridoxal 5'-phosphate binding site.

Belongs to the class-V pyridoxal-phosphate-dependent aminotransferase family. SerC subfamily. Homodimer. Pyridoxal 5'-phosphate serves as cofactor.

Its subcellular location is the cytoplasm. It catalyses the reaction O-phospho-L-serine + 2-oxoglutarate = 3-phosphooxypyruvate + L-glutamate. It carries out the reaction 4-(phosphooxy)-L-threonine + 2-oxoglutarate = (R)-3-hydroxy-2-oxo-4-phosphooxybutanoate + L-glutamate. Its pathway is amino-acid biosynthesis; L-serine biosynthesis; L-serine from 3-phospho-D-glycerate: step 2/3. In terms of biological role, catalyzes the reversible conversion of 3-phosphohydroxypyruvate to phosphoserine and of 3-hydroxy-2-oxo-4-phosphonooxybutanoate to phosphohydroxythreonine. This chain is Phosphoserine aminotransferase, found in Limosilactobacillus fermentum (strain NBRC 3956 / LMG 18251) (Lactobacillus fermentum).